Consider the following 200-residue polypeptide: dITP/XTP pyrophosphatase (200 aa).

5-10 (TRNEGK) is a substrate binding site. Residue D67 is the Proton acceptor of the active site. D67 lines the Mg(2+) pocket. Residues S68, 151–154 (FGYD), K174, and 179–180 (HR) contribute to the substrate site.

The protein belongs to the HAM1 NTPase family. In terms of assembly, homodimer. It depends on Mg(2+) as a cofactor.

It catalyses the reaction XTP + H2O = XMP + diphosphate + H(+). It carries out the reaction dITP + H2O = dIMP + diphosphate + H(+). The catalysed reaction is ITP + H2O = IMP + diphosphate + H(+). Its function is as follows. Pyrophosphatase that catalyzes the hydrolysis of nucleoside triphosphates to their monophosphate derivatives, with a high preference for the non-canonical purine nucleotides XTP (xanthosine triphosphate), dITP (deoxyinosine triphosphate) and ITP. Seems to function as a house-cleaning enzyme that removes non-canonical purine nucleotides from the nucleotide pool, thus preventing their incorporation into DNA/RNA and avoiding chromosomal lesions. This is dITP/XTP pyrophosphatase from Streptococcus pneumoniae serotype 4 (strain ATCC BAA-334 / TIGR4).